Reading from the N-terminus, the 206-residue chain is N-(5'-phosphoribosyl)anthranilate isomerase (206 aa).

Belongs to the TrpF family.

It catalyses the reaction N-(5-phospho-beta-D-ribosyl)anthranilate = 1-(2-carboxyphenylamino)-1-deoxy-D-ribulose 5-phosphate. It participates in amino-acid biosynthesis; L-tryptophan biosynthesis; L-tryptophan from chorismate: step 3/5. The chain is N-(5'-phosphoribosyl)anthranilate isomerase from Rubrobacter xylanophilus (strain DSM 9941 / JCM 11954 / NBRC 16129 / PRD-1).